Reading from the N-terminus, the 146-residue chain is 3-hydroxyacyl-[acyl-carrier-protein] dehydratase FabZ (146 aa).

Histidine 49 is a catalytic residue.

The protein belongs to the thioester dehydratase family. FabZ subfamily.

Its subcellular location is the cytoplasm. It catalyses the reaction a (3R)-hydroxyacyl-[ACP] = a (2E)-enoyl-[ACP] + H2O. Involved in unsaturated fatty acids biosynthesis. Catalyzes the dehydration of short chain beta-hydroxyacyl-ACPs and long chain saturated and unsaturated beta-hydroxyacyl-ACPs. The chain is 3-hydroxyacyl-[acyl-carrier-protein] dehydratase FabZ from Pseudomonas savastanoi pv. phaseolicola (strain 1448A / Race 6) (Pseudomonas syringae pv. phaseolicola (strain 1448A / Race 6)).